The primary structure comprises 523 residues: Arylsulfatase K (523 aa).

An N-terminal signal peptide occupies residues 1–16 (MLRVFVLLIFNVNAYC). Residues Asp-35 and Cys-75 each contribute to the Ca(2+) site. The active-site Nucleophile is Cys-75. Position 75 is a 3-oxoalanine (Cys) (Cys-75). Asn-103 is a glycosylation site (N-linked (GlcNAc...) asparagine). Lys-123 and His-246 together coordinate substrate. Asn-257 carries N-linked (GlcNAc...) asparagine glycosylation. Residues Asp-308 and His-309 each coordinate Ca(2+). N-linked (GlcNAc...) asparagine glycosylation is present at Asn-405.

This sequence belongs to the sulfatase family. Ca(2+) is required as a cofactor. In terms of processing, the conversion to 3-oxoalanine (also known as C-formylglycine, FGly), of a serine or cysteine residue in prokaryotes and of a cysteine residue in eukaryotes, is critical for catalytic activity.

Its subcellular location is the secreted. The protein resides in the lysosome. The enzyme catalyses an aryl sulfate + H2O = a phenol + sulfate + H(+). It catalyses the reaction Hydrolysis of the 2-sulfate groups of the 2-O-sulfo-D-glucuronate residues of chondroitin sulfate, heparin and heparitin sulfate.. Its function is as follows. Catalyzes the hydrolysis of pseudosubstrates such as p-nitrocatechol sulfate and p-nitrophenyl sulfate. Catalyzes the hydrolysis of the 2-sulfate groups of the 2-O-sulfo-D-glucuronate residues of chondroitin sulfate, heparin and heparitin sulfate. Acts selectively on 2-sulfoglucuronate and lacks activity against 2-sulfoiduronate. In Danio rerio (Zebrafish), this protein is Arylsulfatase K (arsk).